We begin with the raw amino-acid sequence, 345 residues long: REAAERSKMIDRNLREDGEKASKEVKLLLLGAGESGKSTIVKQMKIIHEDGYSEEECRQYKVVVYSNTIQSIIAIIRAMGRLRIDFGDVARADDARQLFVLASSAEEGVMSPELAGVIQRLWEDSGVQACFSRSREYQLNDSASYYLSDIERIAQGSYIPTQQDVLRTRVKTTGIVETHFTFKDLYFKMFDVGGQRSERKKWIHCFEGVTAIIFCVALSDYDLLLAEDEEMNRMHESMKLFDSICNNKWFIDTSIILFLNKKDLFEEKISRSPLTICYPEYSGSNTYEEAAAYIQCQFEDLNRRKDTKEIYTHFTCATDTKNVQFVFDAVTDVIIKSNLMECGLY.

In terms of domain architecture, G-alpha spans 23-345 (KEVKLLLLGA…KSNLMECGLY (323 aa)). Residues 26–39 (KLLLLGAGESGKST) form a G1 motif region. GTP-binding residues include Gly33, Glu34, Ser35, Gly36, Lys37, Ser38, Thr39, Asp141, Ser142, Leu166, Arg167, Thr168, Arg169, Val170, Lys171, Thr172, Val192, Gly194, Asn260, Lys261, Asp263, Leu264, Cys316, Ala317, and Thr318. Mg(2+) is bound at residue Ser38. A G2 motif region spans residues 164-172 (DVLRTRVKT). Residue Thr172 coordinates Mg(2+). Residues 187–196 (FKMFDVGGQR) are G3 motif. Positions 256-263 (ILFLNKKD) are G4 motif. Positions 315 to 320 (TCATDT) are G5 motif.

It belongs to the G-alpha family. G(i/o/t/z) subfamily. As to quaternary structure, heterotrimeric G proteins are composed of 3 units; alpha, beta and gamma. The alpha subunit contains the guanine nucleotide binding site. GTP binding causes dissociation of the heterotrimer, liberating the individual subunits so that they can interact with downstream effector proteins.

Its subcellular location is the cytoplasm. It localises to the cell membrane. It is found in the cytoskeleton. The protein resides in the microtubule organizing center. The protein localises to the centrosome. Its subcellular location is the membrane. Heterotrimeric guanine nucleotide-binding proteins (G proteins) function as transducers downstream of G protein-coupled receptors (GPCRs) in numerous signaling cascades. The alpha chain contains the guanine nucleotide binding site and alternates between an active, GTP-bound state and an inactive, GDP-bound state. Signaling by an activated GPCR promotes GDP release and GTP binding. The alpha subunit has a low GTPase activity that converts bound GTP to GDP, thereby terminating the signal. Both GDP release and GTP hydrolysis are modulated by numerous regulatory proteins. Signaling is mediated via effector proteins, such as adenylate cyclase. Inhibits adenylate cyclase activity, leading to decreased intracellular cAMP levels. Stimulates the activity of receptor-regulated K(+) channels. The active GTP-bound form prevents the association of RGS14 with centrosomes and is required for the translocation of RGS14 from the cytoplasm to the plasma membrane. May play a role in cell division. The active GTP-bound form activates the calcium permeant TRPC5 ion channels. The sequence is that of Guanine nucleotide-binding protein G(i) subunit alpha-3 (gnai3) from Xenopus laevis (African clawed frog).